A 379-amino-acid polypeptide reads, in one-letter code: UDP-4-amino-4-deoxy-L-arabinose--oxoglutarate aminotransferase (379 aa).

Residue Lys-182 is modified to N6-(pyridoxal phosphate)lysine.

The protein belongs to the DegT/DnrJ/EryC1 family. ArnB subfamily. In terms of assembly, homodimer. Pyridoxal 5'-phosphate serves as cofactor.

It carries out the reaction UDP-4-amino-4-deoxy-beta-L-arabinose + 2-oxoglutarate = UDP-beta-L-threo-pentopyranos-4-ulose + L-glutamate. It functions in the pathway nucleotide-sugar biosynthesis; UDP-4-deoxy-4-formamido-beta-L-arabinose biosynthesis; UDP-4-deoxy-4-formamido-beta-L-arabinose from UDP-alpha-D-glucuronate: step 2/3. Its pathway is bacterial outer membrane biogenesis; lipopolysaccharide biosynthesis. Catalyzes the conversion of UDP-4-keto-arabinose (UDP-Ara4O) to UDP-4-amino-4-deoxy-L-arabinose (UDP-L-Ara4N). The modified arabinose is attached to lipid A and is required for resistance to polymyxin and cationic antimicrobial peptides. The sequence is that of UDP-4-amino-4-deoxy-L-arabinose--oxoglutarate aminotransferase from Salmonella choleraesuis (strain SC-B67).